Here is a 350-residue protein sequence, read N- to C-terminus: tRNA N6-adenosine threonylcarbamoyltransferase (350 aa).

Fe cation-binding residues include His117 and His121. Residues Leu140–Gly144, Asp173, Gly186, and Asn277 contribute to the substrate site. Residue Asp305 coordinates Fe cation.

The protein belongs to the KAE1 / TsaD family. Fe(2+) is required as a cofactor.

Its subcellular location is the cytoplasm. The enzyme catalyses L-threonylcarbamoyladenylate + adenosine(37) in tRNA = N(6)-L-threonylcarbamoyladenosine(37) in tRNA + AMP + H(+). Required for the formation of a threonylcarbamoyl group on adenosine at position 37 (t(6)A37) in tRNAs that read codons beginning with adenine. Is involved in the transfer of the threonylcarbamoyl moiety of threonylcarbamoyl-AMP (TC-AMP) to the N6 group of A37, together with TsaE and TsaB. TsaD likely plays a direct catalytic role in this reaction. The polypeptide is tRNA N6-adenosine threonylcarbamoyltransferase (Novosphingobium aromaticivorans (strain ATCC 700278 / DSM 12444 / CCUG 56034 / CIP 105152 / NBRC 16084 / F199)).